The chain runs to 219 residues: Probable transcription factor At1g55950 (219 aa).

Positions 9–77 are disordered; sequence ASHSLKSLMA…DEKMETEEEG (69 aa). Over residues 17-30 the composition is skewed to basic residues; it reads MAKKNKRSQQKNKC. Over residues 31-48 the composition is skewed to basic and acidic residues; that stretch reads LKPEKDPSTVKRLLEDPP. Acidic residues predominate over residues 65-77; sequence YGDDEKMETEEEG.

Belongs to the GeBP family.

This Arabidopsis thaliana (Mouse-ear cress) protein is Probable transcription factor At1g55950.